Reading from the N-terminus, the 236-residue chain is Coat protein (236 aa).

Residues 1–27 (MTTPANTTQAVGSTTSTTTTTAGATPA) are disordered. Residues 7 to 27 (TTQAVGSTTSTTTTTAGATPA) are compositionally biased toward low complexity.

This sequence belongs to the potexvirus capsid protein family.

Its subcellular location is the virion. In terms of biological role, required for genome encapsidation. Forms ribonucleoprotein complexes along with TGB1 helicase and viral RNA. The protein is Coat protein of Brassica campestris (Field mustard).